The primary structure comprises 1773 residues: ATP-binding cassette sub-family A member 17 (1773 aa).

3 helical membrane-spanning segments follow: residues 22–42, 262–282, and 306–326; these read TLVT…VLYL, FPLL…NSIL, and AWFI…TVLF. The N-linked (GlcNAc...) asparagine glycan is linked to N340. Transmembrane regions (helical) follow at residues 342 to 362, 372 to 392, 403 to 423, and 444 to 464; these read TLIF…AFMM, GTVI…YITF, ILSC…ISLF, and FTQV…VAFL. The ABC transporter 1 domain maps to 525 to 758; the sequence is IEIQHLYKVF…YGAGYYMTII (234 aa). 561-568 contributes to the ATP binding site; that stretch reads GHNGAGKT. N615 is a glycosylation site (N-linked (GlcNAc...) asparagine). The next 7 helical transmembrane spans lie at 912 to 932, 1088 to 1108, 1134 to 1154, 1166 to 1186, 1198 to 1218, 1236 to 1256, and 1293 to 1313; these read LVLS…LSFF, LVVN…ILTV, LLWD…VFFW, IPAV…LVYT, CVKL…LVTV, IFLI…YYNF, and IGKY…LLFL. A glycan (N-linked (GlcNAc...) asparagine) is linked at N1340. The ABC transporter 2 domain occupies 1369–1602; that stretch reads LVVKELSKVY…FGSGYSLQAK (234 aa). 1404–1411 is a binding site for ATP; that stretch reads GLNGAGKT. The interval 1690–1773 is disordered; sequence NIQQGQAALD…SQPPSEPVLL (84 aa). Positions 1700-1710 are enriched in low complexity; sequence SSLSPSNSRPI. Composition is skewed to pro residues over residues 1711–1740 and 1763–1773; these read SSPP…PSRP and PSQPPSEPVLL.

Belongs to the ABC transporter superfamily. ABCA family. In terms of processing, N-glycosylated.

Its subcellular location is the endoplasmic reticulum membrane. The protein resides in the cytoplasm. It carries out the reaction cholesterol(in) + ATP + H2O = cholesterol(out) + ADP + phosphate + H(+). In terms of biological role, promotes cholesterol efflux from sperm which renders sperm capable of fertilization. Has also been shown to decrease levels of intracellular esterified neutral lipids including cholesteryl esters, fatty acid esters and triacylglycerols. The chain is ATP-binding cassette sub-family A member 17 from Rattus norvegicus (Rat).